The sequence spans 616 residues: Chaperone protein HtpG (616 aa).

The tract at residues methionine 1 to arginine 333 is a; substrate-binding. A b region spans residues glutamate 334 to lysine 542. Residues isoleucine 543–leucine 616 form a c region.

It belongs to the heat shock protein 90 family. As to quaternary structure, homodimer.

The protein resides in the cytoplasm. Functionally, molecular chaperone. Has ATPase activity. The polypeptide is Chaperone protein HtpG (Borreliella afzelii (strain PKo) (Borrelia afzelii)).